Consider the following 85-residue polypeptide: Alpha-toxin Ac2 (85 aa).

The signal sequence occupies residues 1–19 (MNYLVMISLALLFMTGVES). The region spanning 21–83 (KDGYIVDDRN…VRTKGPGRCK (63 aa)) is the LCN-type CS-alpha/beta domain. Disulfide bonds link C31–C82, C35–C55, C41–C65, and C45–C67. K83 carries the lysine amide modification.

Belongs to the long (4 C-C) scorpion toxin superfamily. Sodium channel inhibitor family. Alpha subfamily. In terms of tissue distribution, expressed by the venom gland.

It is found in the secreted. In terms of biological role, alpha toxins bind voltage-independently at site-3 of sodium channels (Nav) and inhibit the inactivation of the activated channels, thereby blocking neuronal transmission. This Androctonus crassicauda (Arabian fat-tailed scorpion) protein is Alpha-toxin Ac2.